Reading from the N-terminus, the 429-residue chain is Serine hydroxymethyltransferase (429 aa).

Residues leucine 127 and 131–133 (GHL) contribute to the (6S)-5,6,7,8-tetrahydrofolate site. The residue at position 236 (lysine 236) is an N6-(pyridoxal phosphate)lysine. A (6S)-5,6,7,8-tetrahydrofolate-binding site is contributed by glutamate 252.

This sequence belongs to the SHMT family. As to quaternary structure, homodimer. Pyridoxal 5'-phosphate serves as cofactor.

It is found in the cytoplasm. The catalysed reaction is (6R)-5,10-methylene-5,6,7,8-tetrahydrofolate + glycine + H2O = (6S)-5,6,7,8-tetrahydrofolate + L-serine. Its pathway is one-carbon metabolism; tetrahydrofolate interconversion. It functions in the pathway amino-acid biosynthesis; glycine biosynthesis; glycine from L-serine: step 1/1. Catalyzes the reversible interconversion of serine and glycine with tetrahydrofolate (THF) serving as the one-carbon carrier. This reaction serves as the major source of one-carbon groups required for the biosynthesis of purines, thymidylate, methionine, and other important biomolecules. Also exhibits THF-independent aldolase activity toward beta-hydroxyamino acids, producing glycine and aldehydes, via a retro-aldol mechanism. The protein is Serine hydroxymethyltransferase of Rhodospirillum centenum (strain ATCC 51521 / SW).